Reading from the N-terminus, the 684-residue chain is Probable phosphoenolpyruvate synthase (684 aa).

His-424 acts as the Tele-phosphohistidine intermediate in catalysis. Residues Arg-517, Arg-564, and Glu-661 each contribute to the substrate site. Glu-661 contacts Mg(2+).

The protein belongs to the PEP-utilizing enzyme family. It depends on Mg(2+) as a cofactor.

The catalysed reaction is pyruvate + ATP + H2O = phosphoenolpyruvate + AMP + phosphate + 2 H(+). Its pathway is carbohydrate biosynthesis; gluconeogenesis. In terms of biological role, catalyzes the phosphorylation of pyruvate to phosphoenolpyruvate. The sequence is that of Probable phosphoenolpyruvate synthase (ppsA) from Methanothermobacter thermautotrophicus (strain ATCC 29096 / DSM 1053 / JCM 10044 / NBRC 100330 / Delta H) (Methanobacterium thermoautotrophicum).